The primary structure comprises 205 residues: Proteasome subunit beta type-3 (205 aa).

It belongs to the peptidase T1B family. As to quaternary structure, the 26S proteasome consists of a 20S proteasome core and two 19S regulatory subunits. The 20S proteasome core is composed of 28 subunits that are arranged in four stacked rings, resulting in a barrel-shaped structure. The two end rings are each formed by seven alpha subunits, and the two central rings are each formed by seven beta subunits. The catalytic chamber with the active sites is on the inside of the barrel.

Its subcellular location is the cytoplasm. It is found in the nucleus. Non-catalytic component of the proteasome, a multicatalytic proteinase complex which is characterized by its ability to cleave peptides with Arg, Phe, Tyr, Leu, and Glu adjacent to the leaving group at neutral or slightly basic pH. The proteasome has an ATP-dependent proteolytic activity. This chain is Proteasome subunit beta type-3 (PSB3), found in Trypanosoma brucei brucei.